Consider the following 756-residue polypeptide: MESSDVELDFQRSVQAVLRELNTPNPALQSNQGMWRWSLHKKVERNPGKSSILVRILLRELEKAESEDGRRVIIPLLLTLMSVLTKATGIPEDLYHRAYTFCTRLLTLPAPYSTVALDCAIRLKTETAVPGTLYQRTVIAEQNLISELYPYQERVFLFVDPELVSASVCSALLLEIQAAQEQQTPEACMRHVVSHALQAALGEACHTGALNRKLQASSRRVLEYYFHAVVAAIEQVASEDSPSRLGHLEKMEEIYCSLLGPATTRRHCVGDLLQDRLPSIPLPSPYITFHLWTDQEQLWKELVLFLRPRSQLRLSADLDALDLQGFRLDRDLARVSTDSGIERDLPLGSDELPDPSSSEMERAALQRKGGIKKRVWPPDFFMPGSWDGPPGLHRRTGRPSGDGELLPGVSRVHTARVLVLGDDRMLGRLAQAYYRLRKRETKKFCLTPRLSLQLYYIPVLAPQVTGQDPEASRKPELGELASFLGRVDPWYESTVNTLCPAILKLAEMPPYLDTSRTVDPFILDVITYYVRMGTQPIYFQLYKVKIFTSLSHDPTEDIFLTELKVKIQDSKSPKEGSSPRRRGAAEGTGAELSMCYQKALLSHRPREVTVSLRATGLVLKAIPAGDTEVSGFFHCTSPNAASATDCSCLHVSVTEVVKSSNLAGRSFTTSTNTFRTSSIQVQSQDQRLLTLWLDKDGRRTFRDVVRFEVSPCPEPCSRTQKSKTSALNSHGQETEKNMAKPNSLLMPINTFSGIIQ.

2 disordered regions span residues 570–589 and 716–738; these read SKSPKEGSSPRRRGAAEGTG and CSRTQKSKTSALNSHGQETEKNM. Residues 717-731 show a composition bias toward polar residues; the sequence is SRTQKSKTSALNSHG.

In terms of assembly, heterodimer of a catalytic subunit (PIK3CG) and a regulatory (PIK3R6) subunit. The binding of PIK3R6 to PIK3CG may exclude the binding of PIK3R5 to PIK3CG. Interacts with beta-gamma G protein dimers. Interacts with PDE3B and RAPGEF3; form a signaling complex that regulates phosphatidylinositol 3-kinase gamma in angiogenesis. As to expression, highly expressed in heart. In a lower extent, also expressed in brain, spleen, lung, liver, kidney, prostate, thyroid, salivary gland, dendritic cells, macrophages and neutrophils.

The protein resides in the cytoplasm. It is found in the cell membrane. Functionally, regulatory subunit of the PI3K gamma complex. Acts as an adapter to drive activation of PIK3CG by beta-gamma G protein dimers. The PIK3CG:PIK3R6 heterodimer is much less sensitive to beta-gamma G proteins than PIK3CG:PIK3R5 and its membrane recruitment and beta-gamma G protein dimer-dependent activation requires HRAS bound to PIK3CG. Recruits of the PI3K gamma complex to a PDE3B:RAPGEF3 signaling complex involved in angiogenesis; signaling seems to involve RRAS. This chain is Phosphoinositide 3-kinase regulatory subunit 6 (Pik3r6), found in Mus musculus (Mouse).